A 729-amino-acid chain; its full sequence is FYN-binding protein 2 (729 aa).

4 disordered regions span residues Lys-18–Gly-130, Glu-170–Leu-320, Glu-371–Val-408, and Val-469–Asp-490. 4 stretches are compositionally biased toward polar residues: residues Gly-69 to Ser-81, Lys-89 to Lys-99, Gly-190 to Ser-216, and Lys-226 to Gln-240. Pro residues predominate over residues Gly-275–Pro-284. The segment covering Pro-374 to Pro-402 has biased composition (basic and acidic residues). The segment covering Thr-473–Ser-485 has biased composition (low complexity). The residue at position 489 (Tyr-489) is a Phosphotyrosine. Residues Tyr-520–Ile-523 carry the SH2-binding; to LCP2 motif. Positions Asp-576–Asp-603 are disordered. The segment covering Asp-584–Asp-593 has biased composition (acidic residues). Tyr-591 carries the phosphotyrosine modification. The span at Val-594 to Asp-603 shows a compositional bias: basic and acidic residues. The 61-residue stretch at Leu-668–Gln-728 folds into the SH3 domain.

In terms of assembly, interacts with SKAP1, LCK and FYN. The phosphorylated form interacts with LCP2. Post-translationally, phosphorylation is required for its function in T-cell activation.

The protein resides in the membrane raft. Functionally, adapter protein that plays a role in T-cell receptor (TCR)-mediated activation of signaling pathways. Required for T-cell activation and integrin-mediated T-cell adhesion in response to TCR stimulation. In Mus musculus (Mouse), this protein is FYN-binding protein 2.